The primary structure comprises 443 residues: Thymidine phosphorylase (443 aa).

Belongs to the thymidine/pyrimidine-nucleoside phosphorylase family. Homodimer.

The enzyme catalyses thymidine + phosphate = 2-deoxy-alpha-D-ribose 1-phosphate + thymine. It functions in the pathway pyrimidine metabolism; dTMP biosynthesis via salvage pathway; dTMP from thymine: step 1/2. Its function is as follows. The enzymes which catalyze the reversible phosphorolysis of pyrimidine nucleosides are involved in the degradation of these compounds and in their utilization as carbon and energy sources, or in the rescue of pyrimidine bases for nucleotide synthesis. The polypeptide is Thymidine phosphorylase (Shewanella sediminis (strain HAW-EB3)).